Here is a 427-residue protein sequence, read N- to C-terminus: Enolase (427 aa).

Position 163 (Q163) interacts with (2R)-2-phosphoglycerate. E205 functions as the Proton donor in the catalytic mechanism. Mg(2+)-binding residues include D242, E283, and D310. Residues K335, R364, S365, and K386 each coordinate (2R)-2-phosphoglycerate. K335 serves as the catalytic Proton acceptor.

Belongs to the enolase family. The cofactor is Mg(2+).

It localises to the cytoplasm. The protein resides in the secreted. It is found in the cell surface. The catalysed reaction is (2R)-2-phosphoglycerate = phosphoenolpyruvate + H2O. It functions in the pathway carbohydrate degradation; glycolysis; pyruvate from D-glyceraldehyde 3-phosphate: step 4/5. Its function is as follows. Catalyzes the reversible conversion of 2-phosphoglycerate (2-PG) into phosphoenolpyruvate (PEP). It is essential for the degradation of carbohydrates via glycolysis. This Salinispora tropica (strain ATCC BAA-916 / DSM 44818 / JCM 13857 / NBRC 105044 / CNB-440) protein is Enolase.